A 364-amino-acid polypeptide reads, in one-letter code: Dihydroorotate dehydrogenase (quinone) (364 aa).

FMN-binding positions include 61–65 (AGFDK) and Thr-85. Residue Lys-65 participates in substrate binding. Residue 110 to 114 (NRMGF) participates in substrate binding. Positions 139 and 170 each coordinate FMN. Position 170 (Asn-170) interacts with substrate. The Nucleophile role is filled by Ser-173. Residue Asn-175 participates in substrate binding. Residues Lys-214 and Ala-242 each coordinate FMN. Substrate is bound at residue 243-244 (NT). FMN-binding positions include Gly-266, Gly-295, and 316–317 (YS).

The protein belongs to the dihydroorotate dehydrogenase family. Type 2 subfamily. Monomer. FMN serves as cofactor.

The protein localises to the cell membrane. The catalysed reaction is (S)-dihydroorotate + a quinone = orotate + a quinol. The protein operates within pyrimidine metabolism; UMP biosynthesis via de novo pathway; orotate from (S)-dihydroorotate (quinone route): step 1/1. Catalyzes the conversion of dihydroorotate to orotate with quinone as electron acceptor. The protein is Dihydroorotate dehydrogenase (quinone) of Rhodopseudomonas palustris (strain HaA2).